We begin with the raw amino-acid sequence, 174 residues long: Trypsin inhibitor BvTI (174 aa).

2 disulfide bridges follow: Cys-41–Cys-84 and Cys-131–Cys-138.

The protein belongs to the protease inhibitor I3 (leguminous Kunitz-type inhibitor) family.

The protein localises to the secreted. Its function is as follows. Inhibits bovine trypsin and chymotrypsin, and human plasmin, plasma kallikrein and factor XIIa. The protein is Trypsin inhibitor BvTI of Bauhinia variegata (Purple orchid tree).